A 208-amino-acid chain; its full sequence is Adenylyl-sulfate kinase (208 aa).

Residue 35–42 coordinates ATP; that stretch reads GLSGSGKS. The active-site Phosphoserine intermediate is the serine 109.

It belongs to the APS kinase family.

It carries out the reaction adenosine 5'-phosphosulfate + ATP = 3'-phosphoadenylyl sulfate + ADP + H(+). It participates in sulfur metabolism; hydrogen sulfide biosynthesis; sulfite from sulfate: step 2/3. Its function is as follows. Catalyzes the synthesis of activated sulfate. The chain is Adenylyl-sulfate kinase from Geotalea uraniireducens (strain Rf4) (Geobacter uraniireducens).